The sequence spans 162 residues: Ribosome maturation factor RimP (162 aa).

Belongs to the RimP family.

Its subcellular location is the cytoplasm. In terms of biological role, required for maturation of 30S ribosomal subunits. The chain is Ribosome maturation factor RimP from Ralstonia nicotianae (strain ATCC BAA-1114 / GMI1000) (Ralstonia solanacearum).